Consider the following 198-residue polypeptide: NADH-quinone oxidoreductase subunit I (198 aa).

4Fe-4S ferredoxin-type domains are found at residues 42 to 72 (LNRW…VEGA) and 88 to 117 (RVYE…MTND). [4Fe-4S] cluster is bound by residues cysteine 52, cysteine 55, cysteine 58, cysteine 62, cysteine 97, cysteine 100, cysteine 103, and cysteine 107. The interval 137 to 198 (APLKEGMEQP…DTQHKDEEAA (62 aa)) is disordered. The segment covering 182 to 198 (AHRDDDNDTQHKDEEAA) has biased composition (basic and acidic residues).

The protein belongs to the complex I 23 kDa subunit family. In terms of assembly, NDH-1 is composed of 14 different subunits. Subunits NuoA, H, J, K, L, M, N constitute the membrane sector of the complex. It depends on [4Fe-4S] cluster as a cofactor.

Its subcellular location is the cell membrane. The enzyme catalyses a quinone + NADH + 5 H(+)(in) = a quinol + NAD(+) + 4 H(+)(out). In terms of biological role, NDH-1 shuttles electrons from NADH, via FMN and iron-sulfur (Fe-S) centers, to quinones in the respiratory chain. The immediate electron acceptor for the enzyme in this species is believed to be ubiquinone. Couples the redox reaction to proton translocation (for every two electrons transferred, four hydrogen ions are translocated across the cytoplasmic membrane), and thus conserves the redox energy in a proton gradient. In Cutibacterium acnes (strain DSM 16379 / KPA171202) (Propionibacterium acnes), this protein is NADH-quinone oxidoreductase subunit I.